We begin with the raw amino-acid sequence, 395 residues long: Chaperone protein DnaJ (395 aa).

A J domain is found at 5–70 (DFYEVLGVDK…NKRAAYDRMG (66 aa)). The CR-type zinc-finger motif lies at 145 to 223 (GKDETIKVPT…CDGVGRVRKT (79 aa)). Residues Cys158, Cys161, Cys175, Cys178, Cys197, Cys200, Cys211, and Cys214 each coordinate Zn(2+). CXXCXGXG motif repeat units follow at residues 158 to 165 (CERCDGQG), 175 to 182 (CGTCQGAG), 197 to 204 (CPQCGGRG), and 211 to 218 (CNDCDGVG).

The protein belongs to the DnaJ family. As to quaternary structure, homodimer. Requires Zn(2+) as cofactor.

It localises to the cytoplasm. In terms of biological role, participates actively in the response to hyperosmotic and heat shock by preventing the aggregation of stress-denatured proteins and by disaggregating proteins, also in an autonomous, DnaK-independent fashion. Unfolded proteins bind initially to DnaJ; upon interaction with the DnaJ-bound protein, DnaK hydrolyzes its bound ATP, resulting in the formation of a stable complex. GrpE releases ADP from DnaK; ATP binding to DnaK triggers the release of the substrate protein, thus completing the reaction cycle. Several rounds of ATP-dependent interactions between DnaJ, DnaK and GrpE are required for fully efficient folding. Also involved, together with DnaK and GrpE, in the DNA replication of plasmids through activation of initiation proteins. In Maricaulis maris (strain MCS10) (Caulobacter maris), this protein is Chaperone protein DnaJ.